The following is a 652-amino-acid chain: Small ribosomal subunit protein mS39 (652 aa).

The N-terminal 37 residues, 1–37 (MYLSRQLRLLPRANIACSLSSSGAHYTTAAPAEDAPI), are a transit peptide targeting the mitochondrion. PPR repeat units follow at residues 129–163 (DSVV…GNPI), 225–259 (TPQS…QVQL), 260–299 (DTNT…KLRP), 300–338 (NLGT…GVNP), and 547–581 (TGQM…QHRI).

The protein belongs to the mitochondrion-specific ribosomal protein mS39 family.

It localises to the mitochondrion. In terms of biological role, mitochondrial protein that may have a role in mitochondrial translation. Essential for larval development. The chain is Small ribosomal subunit protein mS39 from Drosophila melanogaster (Fruit fly).